Consider the following 127-residue polypeptide: Phosphoribosyl-AMP cyclohydrolase (127 aa).

A Mg(2+)-binding site is contributed by Asp75. Position 76 (Cys76) interacts with Zn(2+). Mg(2+) is bound by residues Asp77 and Asp79. Zn(2+) is bound by residues Cys93 and Cys100.

It belongs to the PRA-CH family. Homodimer. The cofactor is Mg(2+). It depends on Zn(2+) as a cofactor.

It localises to the cytoplasm. It carries out the reaction 1-(5-phospho-beta-D-ribosyl)-5'-AMP + H2O = 1-(5-phospho-beta-D-ribosyl)-5-[(5-phospho-beta-D-ribosylamino)methylideneamino]imidazole-4-carboxamide. It functions in the pathway amino-acid biosynthesis; L-histidine biosynthesis; L-histidine from 5-phospho-alpha-D-ribose 1-diphosphate: step 3/9. In terms of biological role, catalyzes the hydrolysis of the adenine ring of phosphoribosyl-AMP. The sequence is that of Phosphoribosyl-AMP cyclohydrolase from Desulfotalea psychrophila (strain LSv54 / DSM 12343).